We begin with the raw amino-acid sequence, 240 residues long: Probable transcriptional regulatory protein Adeh_2184 (240 aa).

This sequence belongs to the TACO1 family.

Its subcellular location is the cytoplasm. This is Probable transcriptional regulatory protein Adeh_2184 from Anaeromyxobacter dehalogenans (strain 2CP-C).